The chain runs to 309 residues: Porphobilinogen deaminase (309 aa).

Cys244 is modified (S-(dipyrrolylmethanemethyl)cysteine).

This sequence belongs to the HMBS family. In terms of assembly, monomer. Dipyrromethane serves as cofactor.

The catalysed reaction is 4 porphobilinogen + H2O = hydroxymethylbilane + 4 NH4(+). The protein operates within porphyrin-containing compound metabolism; protoporphyrin-IX biosynthesis; coproporphyrinogen-III from 5-aminolevulinate: step 2/4. Functionally, tetrapolymerization of the monopyrrole PBG into the hydroxymethylbilane pre-uroporphyrinogen in several discrete steps. This is Porphobilinogen deaminase from Listeria monocytogenes serovar 1/2a (strain ATCC BAA-679 / EGD-e).